The following is a 462-amino-acid chain: Probable Xaa-Pro aminopeptidase pepP (462 aa).

Mn(2+) is bound by residues D259, D270, E393, and E433.

The protein belongs to the peptidase M24B family. The cofactor is Mn(2+).

It catalyses the reaction Release of any N-terminal amino acid, including proline, that is linked to proline, even from a dipeptide or tripeptide.. Its function is as follows. Catalyzes the removal of a penultimate prolyl residue from the N-termini of peptides. The sequence is that of Probable Xaa-Pro aminopeptidase pepP (pepP) from Metarhizium robertsii (strain ARSEF 23 / ATCC MYA-3075) (Metarhizium anisopliae (strain ARSEF 23)).